A 337-amino-acid chain; its full sequence is uncharacterized protein (337 aa).

The interval 291–314 is disordered; it reads NKTRQCSNTKTTTKSTMTPINNGF. Over residues 299–308 the composition is skewed to low complexity; sequence TKTTTKSTMT.

This is an uncharacterized protein from Acanthamoeba polyphaga mimivirus (APMV).